A 511-amino-acid polypeptide reads, in one-letter code: V-type proton ATPase subunit B (511 aa).

Residue arginine 381 coordinates ATP. The segment at phenylalanine 484–alanine 511 is disordered. Positions glutamine 491–proline 501 are enriched in acidic residues. Basic and acidic residues predominate over residues aspartate 502–alanine 511.

It belongs to the ATPase alpha/beta chains family. As to quaternary structure, V-ATPase is a heteromultimeric enzyme composed of a peripheral catalytic V1 complex (components A to H) attached to an integral membrane V0 proton pore complex (components: a, c, c', c'', d, e, f and VOA1).

Its subcellular location is the vacuole membrane. Its function is as follows. Non-catalytic subunit of the V1 complex of vacuolar(H+)-ATPase (V-ATPase), a multisubunit enzyme composed of a peripheral complex (V1) that hydrolyzes ATP and a membrane integral complex (V0) that translocates protons. V-ATPase is responsible for acidifying and maintaining the pH of intracellular compartments. This Candida tropicalis (Yeast) protein is V-type proton ATPase subunit B (VMA2).